The primary structure comprises 88 residues: Large ribosomal subunit protein bL27 (88 aa).

Residues 1 to 13 show a composition bias toward polar residues; the sequence is MATKKGASSSSNG. Residues 1–25 are disordered; sequence MATKKGASSSSNGRDSEAKRLGVKR.

Belongs to the bacterial ribosomal protein bL27 family.

The chain is Large ribosomal subunit protein bL27 from Corynebacterium efficiens (strain DSM 44549 / YS-314 / AJ 12310 / JCM 11189 / NBRC 100395).